The chain runs to 611 residues: L-tyrosine decarboxylase (611 aa).

Pyridoxal 5'-phosphate contacts are provided by residues 151–152 (GS), threonine 292, and 382–384 (DPH). Lysine 385 bears the N6-(pyridoxal phosphate)lysine mark. Residue tyrosine 413 is the Proton donor of the active site. Residue serine 433 coordinates pyridoxal 5'-phosphate.

It belongs to the group II decarboxylase family. Tyrosine decarboxylase subfamily. In terms of assembly, homodimer. The cofactor is pyridoxal 5'-phosphate.

It carries out the reaction L-tyrosine + H(+) = tyramine + CO2. The catalysed reaction is L-dopa + H(+) = dopamine + CO2. The protein operates within amino-acid metabolism. With respect to regulation, levodopa decarboxylation is not inhibited by carbidopa, benserazide, and methyldopa, that are three human L-dopa decarboxylase inhibitors. In terms of biological role, catalyzes the decarboxylation of L-tyrosine to produce tyramine. Plays a role in acid resistance since tyramine production via tyrosine decarboxylation appears to provide a cytosolic pH maintenance mechanism that helps the bacterium cope with acid stress such as that encountered in gastrointestinal tract (GIT) environments. Therefore, may contribute to the colonization of the human GIT by E.faecium. Also involved in drug metabolism, being able to catalyze decarboxylation of levodopa (L-dopa) to dopamine. In gut microbiota this enzyme is in fact exclusively responsible for the decarboxylation of levodopa, and thus reduces in situ levels of levodopa in the treatment of Parkinson's disease. It was shown that abundance of bacterial tyrosine decarboxylase in the proximal small intestine - the primary site of levodopa absorption - contributes to interindividual variation in drug efficacy and can explain the requirement for an increased dosage regimen of levodopa treatment in Parkinson's disease patients. The chain is L-tyrosine decarboxylase from Enterococcus faecium (Streptococcus faecium).